A 192-amino-acid chain; its full sequence is Ion-translocating oxidoreductase complex subunit B (192 aa).

The interval 1-26 (MEMIVIAVVALTLLALLFGMLLGYAS) is hydrophobic. One can recognise a 4Fe-4S domain in the interval 32 to 91 (EEDPVVDQVDELLPQSQCGQCGYPGCRPYAEAVANNGEQINRCVPGGEPVMQKIATLLNV). The [4Fe-4S] cluster site is built by C49, C52, C57, C74, C117, C120, C123, C127, C147, C150, C153, and C157. 4Fe-4S ferredoxin-type domains follow at residues 108–137 (MLAV…GATR) and 138–167 (AMHT…LRPA).

It belongs to the 4Fe4S bacterial-type ferredoxin family. RnfB subfamily. The complex is composed of six subunits: RnfA, RnfB, RnfC, RnfD, RnfE and RnfG. Requires [4Fe-4S] cluster as cofactor.

Its subcellular location is the cell inner membrane. In terms of biological role, part of a membrane-bound complex that couples electron transfer with translocation of ions across the membrane. The protein is Ion-translocating oxidoreductase complex subunit B of Cronobacter sakazakii (strain ATCC BAA-894) (Enterobacter sakazakii).